A 632-amino-acid polypeptide reads, in one-letter code: MTQQTMSFQAEVKQLLHLMIHSLYSNKEIFLRELVSNASDAADKLRFEALENNALYESDPNLRIRLSFDKAARTLTIDDNGIGMSRDEAIANLGTIARSGTKEFFSKLSGDQQKDAALIGQFGVGFYSGFIVADKITVETRRAGLPASEGVRWESAGEGDFSVDTIERAARGTTITLHLREGEDELLSSYRLKSIVQKYSDHVALPILMKKEEWDQEKGEMVEKDEDETVNQASALWTRAKSDVTEEQYKQFYQHVAHDHQDPLAWTHNRVEGRSEYTQLLFVPSHAPFDLWNRDYRGGLKLYVKRVFIMDDAEQLLPQYLRFIKGVVDSSDLPLNVSREILQESRDVKAIREGVTKRALSMLEELANAEDDAGKEKYKTFWSAFGQVLKEGVGEDHANRERVAKLLRFASTHGDTDAQDVALADYVARMKPEQTKIYYVTADTWQAAKNSPHLEVFRKKGVEVLLLTDRVDEWMLSFLHEFDGKPLASVARGDLDLGALNDDEKKAQEETGEAMKPVVDKMKETLGGKVKDVRVTFRLTDSPSCLVADDNDMSGYLQRMLKAAGQNAPSFQPILEINPEHPLVKALKADGADFGDWCHLLFDQALLAEGGALEDPASFVKRTNALLLSRAA.

The segment at 1–339 (MTQQTMSFQA…SSDLPLNVSR (339 aa)) is a; substrate-binding. Residues 340–559 (EILQESRDVK…DNDMSGYLQR (220 aa)) are b. A c region spans residues 560-632 (MLKAAGQNAP…TNALLLSRAA (73 aa)).

Belongs to the heat shock protein 90 family. As to quaternary structure, homodimer.

Its subcellular location is the cytoplasm. Its function is as follows. Molecular chaperone. Has ATPase activity. This Burkholderia thailandensis (strain ATCC 700388 / DSM 13276 / CCUG 48851 / CIP 106301 / E264) protein is Chaperone protein HtpG.